The chain runs to 219 residues: Elongation factor Ts (219 aa).

Residues 82–85 (TDFV) form an involved in Mg(2+) ion dislocation from EF-Tu region.

The protein belongs to the EF-Ts family.

Its subcellular location is the cytoplasm. Associates with the EF-Tu.GDP complex and induces the exchange of GDP to GTP. It remains bound to the aminoacyl-tRNA.EF-Tu.GTP complex up to the GTP hydrolysis stage on the ribosome. In Anaeromyxobacter sp. (strain K), this protein is Elongation factor Ts.